The following is a 276-amino-acid chain: MERRWVFVLLDVLCVLVASLPFIILTLVNAPYKRGFYCGDDSIRYPYRPDTITHGLMAGVIITATVVLVSSGEAYLVYTDRLYSRSDFNNYVAAIYKVLGTFLFGAAVSQSLTDLAKYMIGRLRPSFLAVCDPDWSRVNCSGYVQVEVCRGSPANVTEARLSFYSGHSSFGMYCMLFLALYVQARLCWKWARLLRPTVQFFLVAFAIYVGYTRVSDNKHHWSDVLVGLLQGALVACLTVCYVSDFFKSRPPQSCQENEESERKPSLSLTLTLGDRP.

The Cytoplasmic segment spans residues Met-1–Arg-4. The helical transmembrane segment at Trp-5–Leu-25 threads the bilayer. Residues Thr-26–Thr-51 are Lumenal-facing. Residues Ile-52–Gly-72 traverse the membrane as a helical segment. Topologically, residues Glu-73–Asp-87 are cytoplasmic. A helical membrane pass occupies residues Phe-88–Val-108. At Ser-109–Leu-161 the chain is on the lumenal side. The segment at Lys-117 to Pro-125 is phosphatase sequence motif I. Residues Asn-139 and Asn-155 are each glycosylated (N-linked (GlcNAc...) asparagine). Residues Ser-162–Val-182 form a helical membrane-spanning segment. Residues Tyr-164–His-167 are phosphatase sequence motif II. The Proton donors role is filled by His-167. Over Gln-183–Lys-189 the chain is Cytoplasmic. Residues Trp-190 to Gly-210 traverse the membrane as a helical segment. Topologically, residues Tyr-211 to Leu-225 are lumenal. Residues Thr-212–Asp-223 form a phosphatase sequence motif III region. The Nucleophile role is filled by His-219. A helical transmembrane segment spans residues Val-226 to Phe-246. Topologically, residues Lys-247–Pro-276 are cytoplasmic. Positions Gln-252 to Pro-276 are disordered.

This sequence belongs to the PA-phosphatase related phosphoesterase family. Forms functional homodimers and homooligomers. Can also form heterooligomers with PLPP1 and PLPP3. In terms of processing, N-glycosylated. In terms of tissue distribution, expressed in the brain.

It is found in the membrane. Its subcellular location is the cell membrane. The protein resides in the early endosome membrane. The protein localises to the endoplasmic reticulum membrane. It catalyses the reaction a 1,2-diacyl-sn-glycero-3-phosphate + H2O = a 1,2-diacyl-sn-glycerol + phosphate. It carries out the reaction 1,2-dihexadecanoyl-sn-glycero-3-phosphate + H2O = 1,2-dihexadecanoyl-sn-glycerol + phosphate. The catalysed reaction is 1,2-di-(9Z-octadecenoyl)-sn-glycero-3-phosphate + H2O = 1,2-di-(9Z-octadecenoyl)-sn-glycerol + phosphate. The enzyme catalyses a monoacyl-sn-glycero-3-phosphate + H2O = a monoacylglycerol + phosphate. It catalyses the reaction (9Z)-octadecenoyl-sn-glycero-3-phosphate + H2O = (9Z-octadecenoyl)-glycerol + phosphate. It carries out the reaction sphing-4-enine 1-phosphate + H2O = sphing-4-enine + phosphate. The catalysed reaction is an N-acylsphing-4-enine 1-phosphate + H2O = an N-acylsphing-4-enine + phosphate. The enzyme catalyses N-(octanoyl)-sphing-4-enine-1-phosphate + H2O = N-octanoylsphing-4-enine + phosphate. It catalyses the reaction N-(9Z-octadecenoyl)-ethanolamine phosphate + H2O = N-(9Z-octadecenoyl) ethanolamine + phosphate. Its pathway is lipid metabolism; phospholipid metabolism. Magnesium-independent phospholipid phosphatase. Insensitive to N-ethylmaleimide. Functionally, magnesium-independent phospholipid phosphatase that catalyzes the dephosphorylation of a variety of glycerolipid and sphingolipid phosphate esters including phosphatidate/PA, lysophosphatidate/LPA, sphingosine 1-phosphate/S1P and ceramide 1-phosphate/C1P. Has no apparent extracellular phosphatase activity and therefore most probably acts intracellularly. Also acts on N-oleoyl ethanolamine phosphate/N-(9Z-octadecenoyl)-ethanolamine phosphate, a potential physiological compound. Through dephosphorylation of these bioactive lipid mediators produces new bioactive compounds and may regulate signal transduction in different cellular processes. Indirectly regulates, for instance, cell cycle G1/S phase transition through its phospholipid phosphatase activity. The sequence is that of Phospholipid phosphatase 2 from Rattus norvegicus (Rat).